A 992-amino-acid chain; its full sequence is Leucine-rich repeat receptor-like serine/threonine-protein kinase BAM3 (992 aa).

Positions 1–21 (MADKIFTFFLILSSISPLLCS) are cleaved as a signal peptide. The Extracellular portion of the chain corresponds to 22–656 (SLISPLNLSL…ARSRGEISAK (635 aa)). Residue asparagine 28 is glycosylated (N-linked (GlcNAc...) asparagine). Cysteine 64 and cysteine 71 are oxidised to a cystine. N-linked (GlcNAc...) asparagine glycosylation is found at asparagine 75 and asparagine 87. 6 LRR repeats span residues 75–99 (NQSITRLDLSNLNISGTISPEISRL), 100–124 (SPSLVFLDISSNSFSGELPKEIYEL), 126–148 (GLEVLNISSNVFEGELETRGFSQ), 150–173 (TQLVTLDAYDNSFNGSLPLSLTTL), 174–199 (TRLEHLDLGGNYFDGEIPRSYGSFLS), and 201–221 (KFLSLSGNDLRGRIPNELANI). 2 N-linked (GlcNAc...) asparagine glycosylation sites follow: asparagine 131 and asparagine 163. Asparagine 220 is a glycosylation site (N-linked (GlcNAc...) asparagine). Residues 226-231 (QLYLGY) carry the CLE45 peptide binding motif. LRR repeat units lie at residues 246–270 (LINLVHLDLANCSLKGSIPAELGNL), 271–294 (KNLEVLFLQTNELTGSVPRELGNM), 296–320 (SLKTLDLSNNFLEGEIPLELSGLQK), 322–342 (QLFNLFFNRLHGEIPEFVSEL), 343–366 (PDLQILKLWHNNFTGKIPSKLGSN), 368–391 (NLIEIDLSTNKLTGLIPESLCFGR), 393–414 (LKILILFNNFLFGPLPEDLGQC), 415–438 (EPLWRFRLGQNFLTSKLPKGLIYL), 439–462 (PNLSLLELQNNFLTGEIPEEEAGN), 465–489 (FSSLTQINLSNNRLSGPIPGSIRNL), 491–513 (SLQILLLGANRLSGQIPGEIGSL), 514–536 (KSLLKIDMSRNNFSGKFPPEFGD), 537–561 (CMSLTYLDLSHNQISGQIPVQISQI), 563–585 (ILNYLNVSWNSFNQSLPNELGYM), and 586–610 (KSLTSADFSHNNFSGSVPTSGQFSY). N-linked (GlcNAc...) asparagine glycosylation is found at asparagine 256 and asparagine 293. Residue asparagine 354 is glycosylated (N-linked (GlcNAc...) asparagine). 2 N-linked (GlcNAc...) asparagine glycosylation sites follow: asparagine 440 and asparagine 472. A glycan (N-linked (GlcNAc...) asparagine) is linked at asparagine 525. Asparagine 568, asparagine 575, asparagine 597, asparagine 613, asparagine 631, and asparagine 635 each carry an N-linked (GlcNAc...) asparagine glycan. The chain crosses the membrane as a helical span at residues 657–677 (FKLFFGLGLLGFFLVFVVLAV). At 678–992 (VKNRRMRKNN…ISQAKQPNTF (315 aa)) the chain is on the cytoplasmic side. In terms of domain architecture, Protein kinase spans 710-992 (VKENHVIGKG…ISQAKQPNTF (283 aa)). ATP-binding positions include 716 to 724 (IGKGGRGIV) and lysine 738. Aspartate 836 (proton acceptor) is an active-site residue.

Belongs to the protein kinase superfamily. Ser/Thr protein kinase family. In terms of assembly, interacts with CLE45, especially in roots. Binds to the dimer CLV2/CRN. As to expression, expressed in seedlings, roots, leaves, stems, inflorescences, flowers and siliques. In roots, confined to protophloem and sieve element precursor cells.

The protein resides in the cell membrane. It localises to the endoplasmic reticulum membrane. The enzyme catalyses L-seryl-[protein] + ATP = O-phospho-L-seryl-[protein] + ADP + H(+). It carries out the reaction L-threonyl-[protein] + ATP = O-phospho-L-threonyl-[protein] + ADP + H(+). Its function is as follows. Necessary for male gametophyte development, as well as ovule specification and function. Required for the development of high-ordered vascular strands within the leaf and a correlated control of leaf shape, size and symmetry. LRR-rich receptor-like kinase (LRR-RLK) involved in the perception of CLE45 peptide ligand which mediates root growth inhibition by repressing protophloem differentiation; this mechanism requires CRN. BRX, BAM3, and CLE45 act together to regulate the transition of protophloem cells from proliferation to differentiation, thus impinging on postembryonic growth capacity of the root meristem. Necessary for CLE45 peptide-triggered accumulation of MAKR5 in developing sieve elements. The sequence is that of Leucine-rich repeat receptor-like serine/threonine-protein kinase BAM3 from Arabidopsis thaliana (Mouse-ear cress).